A 470-amino-acid polypeptide reads, in one-letter code: Glutamate--tRNA ligase (470 aa).

Positions 12 to 22 (PSPTGIFHVGG) match the 'HIGH' region motif. Positions 103, 105, 125, and 127 each coordinate Zn(2+). A 'KMSKS' region motif is present at residues 236–240 (KLSKR). Position 239 (K239) interacts with ATP.

This sequence belongs to the class-I aminoacyl-tRNA synthetase family. Glutamate--tRNA ligase type 1 subfamily. In terms of assembly, monomer. Requires Zn(2+) as cofactor.

The protein resides in the cytoplasm. The enzyme catalyses tRNA(Glu) + L-glutamate + ATP = L-glutamyl-tRNA(Glu) + AMP + diphosphate. Catalyzes the attachment of glutamate to tRNA(Glu) in a two-step reaction: glutamate is first activated by ATP to form Glu-AMP and then transferred to the acceptor end of tRNA(Glu). This chain is Glutamate--tRNA ligase, found in Frankia alni (strain DSM 45986 / CECT 9034 / ACN14a).